Reading from the N-terminus, the 124-residue chain is S-adenosylmethionine decarboxylase proenzyme (124 aa).

Residue Ser63 is the Schiff-base intermediate with substrate; via pyruvic acid of the active site. Ser63 carries the post-translational modification Pyruvic acid (Ser); by autocatalysis. The active-site Proton acceptor; for processing activity is His68. Cys83 serves as the catalytic Proton donor; for catalytic activity.

The protein belongs to the prokaryotic AdoMetDC family. Type 1 subfamily. In terms of assembly, heterotetramer of two alpha and two beta chains arranged as a dimer of alpha/beta heterodimers. Requires pyruvate as cofactor. Post-translationally, is synthesized initially as an inactive proenzyme. Formation of the active enzyme involves a self-maturation process in which the active site pyruvoyl group is generated from an internal serine residue via an autocatalytic post-translational modification. Two non-identical subunits are generated from the proenzyme in this reaction, and the pyruvate is formed at the N-terminus of the alpha chain, which is derived from the carboxyl end of the proenzyme. The post-translation cleavage follows an unusual pathway, termed non-hydrolytic serinolysis, in which the side chain hydroxyl group of the serine supplies its oxygen atom to form the C-terminus of the beta chain, while the remainder of the serine residue undergoes an oxidative deamination to produce ammonia and the pyruvoyl group blocking the N-terminus of the alpha chain.

It catalyses the reaction S-adenosyl-L-methionine + H(+) = S-adenosyl 3-(methylsulfanyl)propylamine + CO2. It participates in amine and polyamine biosynthesis; S-adenosylmethioninamine biosynthesis; S-adenosylmethioninamine from S-adenosyl-L-methionine: step 1/1. Functionally, catalyzes the decarboxylation of S-adenosylmethionine to S-adenosylmethioninamine (dcAdoMet), the propylamine donor required for the synthesis of the polyamines spermine and spermidine from the diamine putrescine. The polypeptide is S-adenosylmethionine decarboxylase proenzyme (Thermoanaerobacter pseudethanolicus (strain ATCC 33223 / 39E) (Clostridium thermohydrosulfuricum)).